The primary structure comprises 235 residues: Sugar fermentation stimulation protein homolog (235 aa).

The protein belongs to the SfsA family.

This Roseobacter denitrificans (strain ATCC 33942 / OCh 114) (Erythrobacter sp. (strain OCh 114)) protein is Sugar fermentation stimulation protein homolog.